We begin with the raw amino-acid sequence, 209 residues long: Vacuolar protein sorting-associated protein 28 homolog 1 (209 aa).

One can recognise a VPS28 N-terminal domain in the interval 1-99 (MEVKLWNDKR…TSGVPATVEH (99 aa)). One can recognise a VPS28 C-terminal domain in the interval 109–205 (SSASVVAECV…SYNSFMAALP (97 aa)).

This sequence belongs to the VPS28 family. In terms of assembly, component of the endosomal sorting required for transport complex I (ESCRT-I), composed of ELC, VPS28 and VPS37. Interacts with ELC.

It is found in the endosome. In terms of biological role, component of the ESCRT-I complex (endosomal sorting complex required for transport I), a regulator of vesicular trafficking process. Required for the sorting of endocytic ubiquitinated cargos into multivesicular bodies (MVBs). Mediates the association to the ESCRT-0 complex. The polypeptide is Vacuolar protein sorting-associated protein 28 homolog 1 (VPS28-1) (Arabidopsis thaliana (Mouse-ear cress)).